A 516-amino-acid chain; its full sequence is L-amino-acid oxidase (516 aa).

A signal peptide spans 1–18 (MNVFFMFSLLFLAALGSC). A disulfide bridge connects residues C28 and C189. FAD-binding positions include 61–62 (MS), 81–82 (EA), R89, and 103–106 (GPMR). Residues R106 and H239 each coordinate substrate. Residue V279 participates in FAD binding. Residues C349 and C430 are joined by a disulfide bond. Residue N379 is glycosylated (N-linked (GlcNAc...) asparagine). Substrate is bound at residue Y390. FAD is bound by residues E475 and 482–487 (GWIDST). 482 to 483 (GW) provides a ligand contact to substrate.

It belongs to the flavin monoamine oxidase family. FIG1 subfamily. As to quaternary structure, homodimer; non-covalently linked. The cofactor is FAD. Post-translationally, N-glycosylated. In terms of tissue distribution, expressed by the venom gland.

Its subcellular location is the secreted. It carries out the reaction an L-alpha-amino acid + O2 + H2O = a 2-oxocarboxylate + H2O2 + NH4(+). In terms of biological role, catalyzes an oxidative deamination of predominantly hydrophobic and aromatic L-amino acids, thus producing hydrogen peroxide that may contribute to the diverse toxic effects of this enzyme. Exhibits diverse biological activities, such as hemorrhage, hemolysis, edema, apoptosis of vascular endothelial cells or tumor cell lines, antibacterial and antiparasitic activities, as well as regulation of platelet aggregation. Effects of snake L-amino oxidases on platelets are controversial, since they either induce aggregation or inhibit agonist-induced aggregation. These different effects are probably due to different experimental conditions. The polypeptide is L-amino-acid oxidase (Sistrurus catenatus edwardsii (Desert massasauga)).